The chain runs to 133 residues: ATP synthase epsilon chain, chloroplastic (133 aa).

The protein belongs to the ATPase epsilon chain family. F-type ATPases have 2 components, CF(1) - the catalytic core - and CF(0) - the membrane proton channel. CF(1) has five subunits: alpha(3), beta(3), gamma(1), delta(1), epsilon(1). CF(0) has three main subunits: a, b and c.

Its subcellular location is the plastid. It is found in the chloroplast thylakoid membrane. Produces ATP from ADP in the presence of a proton gradient across the membrane. The polypeptide is ATP synthase epsilon chain, chloroplastic (Helianthus annuus (Common sunflower)).